Consider the following 240-residue polypeptide: Large ribosomal subunit protein uL2 (240 aa).

Residues 1-12 show a composition bias toward basic residues; it reads MGRRIQGQRRGR. Disordered regions lie at residues 1–21 and 198–240; these read MGRR…RAPS and VDHP…GSNK. Basic and acidic residues predominate over residues 221-231; it reads PPGRKVGDIAS.

Belongs to the universal ribosomal protein uL2 family. In terms of assembly, part of the 50S ribosomal subunit. Forms a bridge to the 30S subunit in the 70S ribosome.

Functionally, one of the primary rRNA binding proteins. Required for association of the 30S and 50S subunits to form the 70S ribosome, for tRNA binding and peptide bond formation. It has been suggested to have peptidyltransferase activity; this is somewhat controversial. Makes several contacts with the 16S rRNA in the 70S ribosome. This is Large ribosomal subunit protein uL2 from Halorubrum lacusprofundi (strain ATCC 49239 / DSM 5036 / JCM 8891 / ACAM 34).